A 132-amino-acid chain; its full sequence is MSMTDNVADMLTRIRNAYKSKLINVSFPSSKIKTSILDVLQKEGYIKDYIITHKNNISYTEVALKYSVNGDASICEIHRVSKPGKRVYSAIKDLKGYYNNMGIYILSTPYGVMSDREAHIKNVGGEVICKVF.

The protein belongs to the universal ribosomal protein uS8 family. As to quaternary structure, part of the 30S ribosomal subunit. Contacts proteins S5 and S12.

In terms of biological role, one of the primary rRNA binding proteins, it binds directly to 16S rRNA central domain where it helps coordinate assembly of the platform of the 30S subunit. This Rickettsia canadensis (strain McKiel) protein is Small ribosomal subunit protein uS8.